The following is a 359-amino-acid chain: MSTENTRSVTDLARENVRNLTPYQSARRLGGNGDVWLNANEFPTTVEFQLTQQTLNRYPECQPKAVIENYAQYAGVNPGQVLVSRGADEGIELLIRAFCEPGKEAILYCPPTYGMYSVSSETIGVECRTVPTLENWQLDLRGIADKLDGVKVMFVCSPNNPTGQLINPQDLRTLLEMTRGNAIVVADEAYIEFCPQATLAGWLSEYPHLVVLRTLSKAFALAGLRCGFTLANEEVINLLLKVIAPYPLSTPVADIAAQALTPQGVNAMRERVAQILLERQYLVNALKEIACVEQVFDSETNYILARFTASSSVFKSLWDQGIILRDQNKQPSLSGCLRITVGTREESQRVIDALRAEQV.

N6-(pyridoxal phosphate)lysine is present on Lys-217.

The protein belongs to the class-II pyridoxal-phosphate-dependent aminotransferase family. Histidinol-phosphate aminotransferase subfamily. As to quaternary structure, homodimer. It depends on pyridoxal 5'-phosphate as a cofactor.

It carries out the reaction L-histidinol phosphate + 2-oxoglutarate = 3-(imidazol-4-yl)-2-oxopropyl phosphate + L-glutamate. Its pathway is amino-acid biosynthesis; L-histidine biosynthesis; L-histidine from 5-phospho-alpha-D-ribose 1-diphosphate: step 7/9. This is Histidinol-phosphate aminotransferase from Citrobacter koseri (strain ATCC BAA-895 / CDC 4225-83 / SGSC4696).